Here is a 519-residue protein sequence, read N- to C-terminus: Transcription factor STP1 (519 aa).

The interval 16 to 35 (IPGKIYAFFRELVSGVIISK) is i. Residues 47–61 (ATKEEGKDAADEEKT) show a composition bias toward basic and acidic residues. Disordered regions lie at residues 47–69 (ATKE…FPES) and 115–150 (LLGS…EHST). Positions 65 to 97 (LFPESNNIDRSLNGGCSVIPCSMDVSDLNTPIS) are II. Positions 131 to 146 (STGVTSSPLSPSGSTP) are enriched in low complexity. The segment at 160–182 (FICHYCDATFRIRGYLTRHIKKH) adopts a C2H2-type 1 zinc-finger fold. The C2H2-type 2; atypical zinc finger occupies 188-223 (YHCPFFNSATPPDLRCHNSGGFSRRDTYKTHLKARH). A C2H2-type 3; atypical zinc finger spans residues 240 to 265 (GHCAQCGEYFSTIENFVENHIESGDC). The interval 357–382 (IKKKQQQVSGSTVTTPEVATQNNQEV) is disordered. Over residues 364-381 (VSGSTVTTPEVATQNNQE) the composition is skewed to polar residues.

Interacts (via Region II) with SSY5; protease component of the SPS-sensor. Post-translationally, phosphorylated by casein kinase I. Phosphorylation is not dependent on the extracellular amino acid levels, but is a prerequisite for proteolytic processing. In terms of processing, activated by the amino acid-induced proteolytic removal of an N-terminal inhibitory domain by serine protease SSY5, an intrinsic component of the SPS-sensor. Processing requires at least 2 components of the SCF(GRR1) ubiquitin ligase complex, namely the F-box protein GRR1 and the E2 enzyme CDC34, but does not depend on the proteasome. Processing is negatively regulated by the protein phosphatase 2A regulatory subunit RTS1.

It localises to the cell membrane. It is found in the nucleus. Functionally, transcription factor involved in the regulation of gene expression in response to extracellular amino acid levels. Synthesized as latent cytoplasmic precursor, which, upon a signal initiated by the plasma membrane SPS (SSY1-PTR3-SSY5) amino acid sensor system, becomes proteolytically activated and relocates to the nucleus, where it induces the expression of SPS-sensor-regulated genes, including the amino-acid permeases AGP1, BAP2, BAP3 and GNP1. Binding to promoters is facilitated by DAL81. Involved in the repression of genes subject to nitrogen catabolite repression and genes involved in stress response. Negatively regulated by inner nuclear membrane proteins ASI1, ASI2 and ASI3, which prevent unprocessed precursor forms that escape cytoplasmic anchoring from inducing SPS-sensor-regulated genes. May be involved in pre-tRNA splicing. The sequence is that of Transcription factor STP1 (STP1) from Saccharomyces cerevisiae (strain RM11-1a) (Baker's yeast).